The following is a 188-amino-acid chain: Peptidyl-tRNA hydrolase (188 aa).

TRNA is bound at residue Phe-15. His-20 functions as the Proton acceptor in the catalytic mechanism. TRNA contacts are provided by Tyr-64, Asn-66, and Asn-112.

Belongs to the PTH family. Monomer.

It is found in the cytoplasm. The catalysed reaction is an N-acyl-L-alpha-aminoacyl-tRNA + H2O = an N-acyl-L-amino acid + a tRNA + H(+). In terms of biological role, hydrolyzes ribosome-free peptidyl-tRNAs (with 1 or more amino acids incorporated), which drop off the ribosome during protein synthesis, or as a result of ribosome stalling. Catalyzes the release of premature peptidyl moieties from peptidyl-tRNA molecules trapped in stalled 50S ribosomal subunits, and thus maintains levels of free tRNAs and 50S ribosomes. The protein is Peptidyl-tRNA hydrolase of Borreliella burgdorferi (strain ATCC 35210 / DSM 4680 / CIP 102532 / B31) (Borrelia burgdorferi).